The primary structure comprises 637 residues: Sodium-dependent nutrient amino acid transporter 1 (637 aa).

Polar residues predominate over residues 1–17; the sequence is MELKTMPQNGANAGTQH. The segment at 1-39 is disordered; the sequence is MELKTMPQNGANAGTQHNNNSNNKPDNNEKEAQKKEPER. The Cytoplasmic segment spans residues 1 to 47; sequence MELKTMPQNGANAGTQHNNNSNNKPDNNEKEAQKKEPERTNWSNGLE. A compositionally biased stretch (basic and acidic residues) spans 26-39; that stretch reads DNNEKEAQKKEPER. Helical transmembrane passes span 48–68, 75–95, and 128–148; these read FLMS…FPFT, GAFL…MYYL, and TICI…YLFV. 2 N-linked (GlcNAc...) asparagine glycosylation sites follow: N181 and N195. 9 helical membrane passes run 225–245, 254–274, 303–323, 337–357, 397–417, 443–463, 470–490, 515–535, and 549–569; these read PDWK…LVIM, AAYF…GRAV, AVVQ…MFAS, IVTT…FAIL, LFSA…IVAL, ICGF…ILTL, TYVV…IYGL, FFTP…ISPI, and AGWV…WWYI.

It belongs to the sodium:neurotransmitter symporter (SNF) (TC 2.A.22) family.

It localises to the membrane. Unusual broad substrate spectrum amino acid:sodium cotransporter that promotes absorption of the D isomers of essential amino acids. Neutral amino acids are the preferred substrates, especially methionine and phenylalanine. This Drosophila virilis (Fruit fly) protein is Sodium-dependent nutrient amino acid transporter 1.